Consider the following 228-residue polypeptide: Gliolectin (228 aa).

Over 1–120 the chain is Cytoplasmic; it reads MLCPPMALGP…NPKAVSQAPR (120 aa). A helical; Signal-anchor for type II membrane protein transmembrane segment spans residues 121-137; it reads GMALTPAQISASAKLIL. Residues 138 to 228 lie on the Extracellular side of the membrane; that stretch reads QKCPESDRKK…GTSELADQKQ (91 aa). The tract at residues 141–228 is disordered; the sequence is PESDRKKSNG…GTSELADQKQ (88 aa). Residues N149, N156, N198, N199, N205, and N218 are each glycosylated (N-linked (GlcNAc...) asparagine). Low complexity predominate over residues 195–213; sequence NNNNNSSSSNNNSNMNINN. Over residues 218 to 228 the composition is skewed to polar residues; it reads NGTSELADQKQ.

In terms of tissue distribution, expressed by a subset of glial cells found at the midline of the embryo stage 12 nervous system. Expression is highest during the formation of the embryonic axonal commissures, a process requiring midline glial cell function (at protein level).

It is found in the membrane. Has a role in intercellular carbohydrate-mediated cell adhesion. The sequence is that of Gliolectin from Drosophila melanogaster (Fruit fly).